The following is a 168-amino-acid chain: Nicotinamide-nucleotide adenylyltransferase (168 aa).

ATP contacts are provided by Arg8, Phe9, His13, His16, Phe119, Arg121, Tyr124, Gly126, Thr127, and Arg130.

The protein belongs to the archaeal NMN adenylyltransferase family. In terms of assembly, homohexamer existing as a trimer of dimers.

The protein localises to the cytoplasm. It catalyses the reaction beta-nicotinamide D-ribonucleotide + ATP + H(+) = diphosphate + NAD(+). It functions in the pathway cofactor biosynthesis; NAD(+) biosynthesis; NAD(+) from nicotinamide D-ribonucleotide: step 1/1. Its function is as follows. Catalyzes the formation of NAD(+) from nicotinamide mononucleotide (NMN) and ATP. In Methanocaldococcus jannaschii (strain ATCC 43067 / DSM 2661 / JAL-1 / JCM 10045 / NBRC 100440) (Methanococcus jannaschii), this protein is Nicotinamide-nucleotide adenylyltransferase.